Consider the following 197-residue polypeptide: Fucoxanthin-chlorophyll a-c binding protein F, chloroplastic (197 aa).

The transit peptide at 1–31 directs the protein to the chloroplast; that stretch reads MKFAVFASLLASAAAFAPAQQSARTSVATNM. The next 3 helical transmembrane spans lie at 73–94, 114–134, and 174–196; these read ISML…PGDI, ISTA…IAVM, and GRAA…SLIP.

It belongs to the fucoxanthin chlorophyll protein family. In terms of assembly, the LHC complex of chromophytic algae is composed of fucoxanthin, chlorophyll A and C bound non-covalently by fucoxanthin chlorophyll proteins (FCPs). The ratio of the pigments in lhc; fucoxanthin: chlorophyll C: chlorophyll A is (0.6-1): (0.1-0.3): (1).

Its subcellular location is the plastid. It localises to the chloroplast thylakoid membrane. In terms of biological role, the light-harvesting complex (LHC) functions as a light receptor, it captures and delivers excitation energy to photosystems with which it is closely associated. In chromophytic algae, LHC is associated with photosystem II, energy being transferred from fucoxanthin and chlorophyll C to chlorophyll A and the photosynthetic reaction centers where it is used to synthesize ATP and reducing power. The protein is Fucoxanthin-chlorophyll a-c binding protein F, chloroplastic (FCPF) of Phaeodactylum tricornutum (Diatom).